Reading from the N-terminus, the 295-residue chain is Ribosomal RNA small subunit methyltransferase H (295 aa).

S-adenosyl-L-methionine contacts are provided by residues 32-34, Asp50, Phe77, Asp98, and Gln105; that span reads GGY. The tract at residues 275-295 is disordered; that stretch reads KEISENTRSRSAKLRGIVKEE.

The protein belongs to the methyltransferase superfamily. RsmH family.

The protein resides in the cytoplasm. The enzyme catalyses cytidine(1402) in 16S rRNA + S-adenosyl-L-methionine = N(4)-methylcytidine(1402) in 16S rRNA + S-adenosyl-L-homocysteine + H(+). In terms of biological role, specifically methylates the N4 position of cytidine in position 1402 (C1402) of 16S rRNA. This Anaplasma phagocytophilum (strain HZ) protein is Ribosomal RNA small subunit methyltransferase H.